Consider the following 139-residue polypeptide: NADPH-dependent 7-cyano-7-deazaguanine reductase (139 aa).

Residue Cys34 is the Thioimide intermediate of the active site. Residue Asp41 is the Proton donor of the active site. Substrate is bound by residues 56–58 (IEL) and 75–76 (HE).

The protein belongs to the GTP cyclohydrolase I family. QueF type 1 subfamily.

It is found in the cytoplasm. The enzyme catalyses 7-aminomethyl-7-carbaguanine + 2 NADP(+) = 7-cyano-7-deazaguanine + 2 NADPH + 3 H(+). It participates in tRNA modification; tRNA-queuosine biosynthesis. Functionally, catalyzes the NADPH-dependent reduction of 7-cyano-7-deazaguanine (preQ0) to 7-aminomethyl-7-deazaguanine (preQ1). The chain is NADPH-dependent 7-cyano-7-deazaguanine reductase from Nitrosomonas europaea (strain ATCC 19718 / CIP 103999 / KCTC 2705 / NBRC 14298).